The chain runs to 270 residues: MLLGSVPQLDRVAVQLGPFPVYWYGIIIGTGVLLGLWLATREGERLGIPKDTFVDLVLIAVPIAILFARMYYVIFEWEYYAQNPSQIINIRQGGLAIHGGLIGAVVTGILFAKRRGVSFWKLADIAAPSILLGQAIGRWGNFMNQEAHGDEVTRQFLEGLHLPDFIINQMYIDGVYYHPTFLYESLWNFAGVILLLALRKVNLRRGELFFTYLIWYSIGRFFVEGLRTDSLMLGPLRIAQVMSIGLVVISIIFIIVRRKMGQADKRYSEN.

Transmembrane regions (helical) follow at residues 19–39 (FPVY…LWLA), 56–76 (LVLI…VIFE), 92–112 (QGGL…ILFA), and 116–136 (GVSF…GQAI). R138 contributes to the a 1,2-diacyl-sn-glycero-3-phospho-(1'-sn-glycerol) binding site. 3 helical membrane-spanning segments follow: residues 178-198 (HPTF…LLAL), 206-226 (GELF…VEGL), and 236-256 (LRIA…FIIV).

The protein belongs to the Lgt family.

The protein resides in the cell membrane. It catalyses the reaction L-cysteinyl-[prolipoprotein] + a 1,2-diacyl-sn-glycero-3-phospho-(1'-sn-glycerol) = an S-1,2-diacyl-sn-glyceryl-L-cysteinyl-[prolipoprotein] + sn-glycerol 1-phosphate + H(+). It participates in protein modification; lipoprotein biosynthesis (diacylglyceryl transfer). Functionally, catalyzes the transfer of the diacylglyceryl group from phosphatidylglycerol to the sulfhydryl group of the N-terminal cysteine of a prolipoprotein, the first step in the formation of mature lipoproteins. The polypeptide is Phosphatidylglycerol--prolipoprotein diacylglyceryl transferase (Bacillus anthracis (strain A0248)).